We begin with the raw amino-acid sequence, 505 residues long: ATP synthase subunit alpha (505 aa).

171 to 178 (GDRQTGKT) lines the ATP pocket.

The protein belongs to the ATPase alpha/beta chains family. As to quaternary structure, F-type ATPases have 2 components, CF(1) - the catalytic core - and CF(0) - the membrane proton channel. CF(1) has five subunits: alpha(3), beta(3), gamma(1), delta(1), epsilon(1). CF(0) has three main subunits: a(1), b(2) and c(9-12). The alpha and beta chains form an alternating ring which encloses part of the gamma chain. CF(1) is attached to CF(0) by a central stalk formed by the gamma and epsilon chains, while a peripheral stalk is formed by the delta and b chains.

The protein localises to the cell inner membrane. It catalyses the reaction ATP + H2O + 4 H(+)(in) = ADP + phosphate + 5 H(+)(out). Its function is as follows. Produces ATP from ADP in the presence of a proton gradient across the membrane. The alpha chain is a regulatory subunit. The chain is ATP synthase subunit alpha from Campylobacter hominis (strain ATCC BAA-381 / DSM 21671 / CCUG 45161 / LMG 19568 / NCTC 13146 / CH001A).